The chain runs to 241 residues: MFYSGLLTEGGRKETDMREAASLRQQRRMKQAVQFIHKDSADLLPLDGLKKLGSSKDMQPHNILQRRLMETNLSKLRSGPRVPWASKTNKLNQAKSEGLKKSEEDDMILVSCQCAGKDVKALVDTGCLYNLISLACVDRLGLKEHVKSHKHEGEKLSLPRHLKVVGQIEHLVITLGSLRLDCPAAVVDDNEKNLSLGLQTLRSLKCIINLDKHRLIMGKTDKEEIPFVETVSLNEDNTSEA.

The protein is Nuclear receptor-interacting protein 3 (NRIP3) of Homo sapiens (Human).